Reading from the N-terminus, the 499-residue chain is Terpentedienyl-diphosphate synthase (499 aa).

Positions 284 and 286 each coordinate Mg(2+). The DXDD motif signature appears at 284–287; that stretch reads DGDD.

This sequence belongs to the terpene synthase family. In terms of assembly, monomer. It depends on Mg(2+) as a cofactor.

It catalyses the reaction (2E,6E,10E)-geranylgeranyl diphosphate = terpentedienyl diphosphate. It participates in antibiotic biosynthesis. Functionally, involved in the production of the isoprenoid antibiotic terpentecin. Converts geranylgeranyl diphosphate (GGDP) into terpentedienol diphosphate (TDP) by a protonation-initiated cyclization. The chain is Terpentedienyl-diphosphate synthase (cyc1) from Kitasatospora griseola (Streptomyces griseolosporeus).